Reading from the N-terminus, the 231-residue chain is 2-C-methyl-D-erythritol 4-phosphate cytidylyltransferase (231 aa).

This sequence belongs to the IspD/TarI cytidylyltransferase family. IspD subfamily.

The catalysed reaction is 2-C-methyl-D-erythritol 4-phosphate + CTP + H(+) = 4-CDP-2-C-methyl-D-erythritol + diphosphate. Its pathway is isoprenoid biosynthesis; isopentenyl diphosphate biosynthesis via DXP pathway; isopentenyl diphosphate from 1-deoxy-D-xylulose 5-phosphate: step 2/6. Catalyzes the formation of 4-diphosphocytidyl-2-C-methyl-D-erythritol from CTP and 2-C-methyl-D-erythritol 4-phosphate (MEP). This is 2-C-methyl-D-erythritol 4-phosphate cytidylyltransferase from Shewanella pealeana (strain ATCC 700345 / ANG-SQ1).